The chain runs to 147 residues: UPF0260 protein CJA_2436 (147 aa).

This sequence belongs to the UPF0260 family.

The sequence is that of UPF0260 protein CJA_2436 from Cellvibrio japonicus (strain Ueda107) (Pseudomonas fluorescens subsp. cellulosa).